Consider the following 134-residue polypeptide: Small ribosomal subunit protein uS12 (134 aa).

Position 89 is a 3-methylthioaspartic acid (D89). A disordered region spans residues 109–134 (KRNVSRSKYGAKKGKAGAAPTTGKKK). Basic residues predominate over residues 111–123 (NVSRSKYGAKKGK). The span at 124–134 (AGAAPTTGKKK) shows a compositional bias: low complexity.

It belongs to the universal ribosomal protein uS12 family. In terms of assembly, part of the 30S ribosomal subunit. Contacts proteins S8 and S17. May interact with IF1 in the 30S initiation complex.

Functionally, with S4 and S5 plays an important role in translational accuracy. Interacts with and stabilizes bases of the 16S rRNA that are involved in tRNA selection in the A site and with the mRNA backbone. Located at the interface of the 30S and 50S subunits, it traverses the body of the 30S subunit contacting proteins on the other side and probably holding the rRNA structure together. The combined cluster of proteins S8, S12 and S17 appears to hold together the shoulder and platform of the 30S subunit. The sequence is that of Small ribosomal subunit protein uS12 from Wolinella succinogenes (strain ATCC 29543 / DSM 1740 / CCUG 13145 / JCM 31913 / LMG 7466 / NCTC 11488 / FDC 602W) (Vibrio succinogenes).